A 422-amino-acid chain; its full sequence is Phytoene synthase 1, chloroplastic (422 aa).

Residues 1-70 (MSSSVAVLWV…NRSRRIGVVS (70 aa)) constitute a chloroplast transit peptide.

Belongs to the phytoene/squalene synthase family. Monomer. Interacts with OR. Interacts with ORLIKE.

The protein localises to the plastid. Its subcellular location is the chloroplast membrane. It carries out the reaction 2 (2E,6E,10E)-geranylgeranyl diphosphate = 15-cis-phytoene + 2 diphosphate. It functions in the pathway carotenoid biosynthesis; phytoene biosynthesis; all-trans-phytoene from geranylgeranyl diphosphate: step 1/1. Functionally, catalyzes the reaction from prephytoene diphosphate to phytoene. The polypeptide is Phytoene synthase 1, chloroplastic (Arabidopsis thaliana (Mouse-ear cress)).